Consider the following 469-residue polypeptide: Keratin, type II cytoskeletal 7 (469 aa).

The residue at position 2 (serine 2) is an N-acetylserine. Residues serine 2, serine 6, and serine 7 each carry the phosphoserine modification. Positions 2–90 are head; the sequence is SIHFSSPVFT…DPSLQRVRQE (89 aa). An O-linked (GlcNAc) serine glycan is attached at serine 12. Arginine 20 carries the post-translational modification Dimethylated arginine; alternate. Arginine 20 carries the omega-N-methylarginine; alternate modification. Phosphoserine occurs at positions 53, 71, and 83. Residues 90–126 form a coil 1A region; it reads EEREQIKTLNNKFASFIDKVRFLEQQNKLLETKWTLL. In terms of domain architecture, IF rod spans 91–403; that stretch reads EREQIKTLNN…KLLEGEESRL (313 aa). A Phosphothreonine modification is found at threonine 97. The interval 127-144 is linker 1; the sequence is QEQKSAKSSRLPDIFEAQ. Lysine 130 is covalently cross-linked (Glycyl lysine isopeptide (Lys-Gly) (interchain with G-Cter in SUMO2)). Residues 145-236 are coil 1B; it reads IAGLRGQLEA…TLNETELTEL (92 aa). N6-acetyllysine is present on lysine 179. The segment at 237 to 260 is linker 12; the sequence is QSQISDTSVVLSMDNSRSLDLDGI. Phosphoserine occurs at positions 252 and 254. The segment at 261-399 is coil 2; that stretch reads IAEVKAQYEE…ATYRKLLEGE (139 aa). Glycyl lysine isopeptide (Lys-Gly) (interchain with G-Cter in SUMO2) cross-links involve residues lysine 265 and lysine 286. At threonine 289 the chain carries Phosphothreonine. Residues lysine 296 and lysine 331 each participate in a glycyl lysine isopeptide (Lys-Gly) (interchain with G-Cter in SUMO2) cross-link. The interval 400–469 is tail; sequence ESRLAGDGVG…ASASRRSARN (70 aa).

It belongs to the intermediate filament family. Heterotetramer of two type I and two type II keratins. Interacts with eukaryotic translation initiator factor 3 (eIF3) subunit EIF3S10. Interacts with GPER1. In terms of processing, arg-20 is dimethylated, probably to asymmetric dimethylarginine.

Its function is as follows. Blocks interferon-dependent interphase and stimulates DNA synthesis in cells. In Pan troglodytes (Chimpanzee), this protein is Keratin, type II cytoskeletal 7.